We begin with the raw amino-acid sequence, 228 residues long: E3 ubiquitin-protein ligase RNF114 (228 aa).

The segment at 29–68 adopts an RING-type zinc-finger fold; sequence CPVCLEVYEKPVQVPCGHVFCSACLQECLKPKKPVCGVCR. C91 and C94 together coordinate Zn(2+). A C2HC RNF-type zinc finger spans residues 91–110; it reads CHGCRKNFFLSKIRSHVATC. K102 bears the N6-acetyllysine mark. Zn(2+) contacts are provided by H106 and C110. K112 carries the post-translational modification N6-acetyllysine.

Interacts with XAF1, the interaction increases XAF1 stability and proapoptotic effects, and may regulate IFN signaling. Autoubiquitinated. Polyubiquitinated in the presence of E2 enzymes UBE2D1, UBE2D2 and UBE2D3, but only monoubiquitinated in the presence of UBE2E1. In terms of tissue distribution, expressed in numerous tissues, including skin, CD4 lymphocytes and dendritic cells. Highest levels in testis.

The protein localises to the cytoplasm. It localises to the nucleus. It catalyses the reaction S-ubiquitinyl-[E2 ubiquitin-conjugating enzyme]-L-cysteine + [acceptor protein]-L-lysine = [E2 ubiquitin-conjugating enzyme]-L-cysteine + N(6)-ubiquitinyl-[acceptor protein]-L-lysine.. It participates in protein modification; protein ubiquitination. Functionally, E3 ubiquitin-protein ligase that promotes the ubiquitination of various substrates. In turn, participates in the regulation of many biological processes including cell cycle, apoptosis, osteoclastogenesis as well as innate or adaptive immunity. Acts as a negative regulator of NF-kappa-B-dependent transcription by promoting the ubiquitination and stabilization of the NF-kappa-B inhibitor TNFAIP3. May promote the ubiquitination of TRAF6 as well. Also acts as a negative regulator of T-cell activation. Inhibits cellular dsRNA responses and interferon production by targeting MAVS component for proteasomal degradation. Ubiquitinates the CDK inhibitor CDKN1A leading to its degradationand probably also CDKN1B and CDKN1C. This activity stimulates cell cycle G1-to-S phase transition and suppresses cellular senescence. May play a role in spermatogenesis. The sequence is that of E3 ubiquitin-protein ligase RNF114 (RNF114) from Homo sapiens (Human).